The sequence spans 88 residues: Beta-insect excitatory toxin LqhIT1a (88 aa).

An N-terminal signal peptide occupies residues 1–18 (MKFFLLFLVVLPIMGVLG). The LCN-type CS-alpha/beta domain maps to 20–83 (KNGYAVDSKG…ISGTTKKYCD (64 aa)). Intrachain disulfides connect Cys34-Cys55, Cys40-Cys60, Cys44-Cys62, and Cys56-Cys82.

The protein belongs to the long (4 C-C) scorpion toxin superfamily. Sodium channel inhibitor family. Beta subfamily. Expressed by the venom gland.

Its subcellular location is the secreted. Functionally, excitatory insect toxins induce a spastic paralysis. They bind voltage-independently at site-4 of sodium channels (Nav) and shift the voltage of activation toward more negative potentials thereby affecting sodium channel activation and promoting spontaneous and repetitive firing. The chain is Beta-insect excitatory toxin LqhIT1a from Leiurus hebraeus (Hebrew deathstalker scorpion).